Reading from the N-terminus, the 474-residue chain is Ubiquinol-cytochrome-c reductase complex core protein 2, mitochondrial (474 aa).

The N-terminal 42 residues, 1 to 42, are a transit peptide targeting the mitochondrion; that stretch reads MKSVVRSKGTQALFRRFSSALGDSINPNQVGVGDNVIRVNGR.

The protein belongs to the peptidase M16 family. UQCRC2/QCR2 subfamily. Component of the ubiquinol-cytochrome c oxidoreductase (cytochrome b-c1 complex, complex III, CIII), a multisubunit enzyme composed of 3 respiratory subunits cytochrome b, cytochrome c1 and Rieske protein, 2 core protein subunits, and additional low-molecular weight protein subunits. The complex exists as an obligatory dimer and forms supercomplexes (SCs) in the inner mitochondrial membrane with cytochrome c oxidase (complex IV, CIV).

It is found in the mitochondrion inner membrane. Its function is as follows. Component of the ubiquinol-cytochrome c oxidoreductase, a multisubunit transmembrane complex that is part of the mitochondrial electron transport chain which drives oxidative phosphorylation. The respiratory chain contains 3 multisubunit complexes succinate dehydrogenase (complex II, CII), ubiquinol-cytochrome c oxidoreductase (cytochrome b-c1 complex, complex III, CIII) and cytochrome c oxidase (complex IV, CIV), that cooperate to transfer electrons derived from NADH and succinate to molecular oxygen, creating an electrochemical gradient over the inner membrane that drives transmembrane transport and the ATP synthase. The cytochrome b-c1 complex catalyzes electron transfer from ubiquinol to cytochrome c, linking this redox reaction to translocation of protons across the mitochondrial inner membrane, with protons being carried across the membrane as hydrogens on the quinol. In the process called Q cycle, 2 protons are consumed from the matrix, 4 protons are released into the intermembrane space and 2 electrons are passed to cytochrome c. The sequence is that of Ubiquinol-cytochrome-c reductase complex core protein 2, mitochondrial from Euglena gracilis.